Here is a 261-residue protein sequence, read N- to C-terminus: MRIALGIEYDGSGYFGWQRQAEVDSVQGQLEQALSKVANEPISLFCAGRTDAGVHATGQVVHFETNAIRNEGAWTLGVNANLPDNIAVRWAKEVDDSFHARFSATARRYRYVIYNHNFRPGILRHGVSHYHGDIDADKMHVAAQALLGEQDFTSFRAVQCQSKTPFRNVHSVKVTRQGMYVIVDISANAFLHHMVRNIVGSLLEIGLGNQPLTWMADLLALKDRNQAAATAKPNGLYLVDVTYPEQYQLPKLALGPLFMLD.

Residue D51 is the Nucleophile of the active site. Y109 is a binding site for substrate.

It belongs to the tRNA pseudouridine synthase TruA family. As to quaternary structure, homodimer.

The catalysed reaction is uridine(38/39/40) in tRNA = pseudouridine(38/39/40) in tRNA. Functionally, formation of pseudouridine at positions 38, 39 and 40 in the anticodon stem and loop of transfer RNAs. This Shewanella sp. (strain MR-4) protein is tRNA pseudouridine synthase A.